Consider the following 344-residue polypeptide: Exopolyphosphatase 1 (344 aa).

Positions 319–344 (VHTSVRAVGGQPADRNAANRSRGSKP) are disordered.

It belongs to the GppA/Ppx family. As to quaternary structure, homodimer.

It carries out the reaction [phosphate](n) + H2O = [phosphate](n-1) + phosphate + H(+). Its function is as follows. Degradation of inorganic polyphosphates (polyP). Releases orthophosphate processively from the ends of the polyP chain. The sequence is that of Exopolyphosphatase 1 from Mycobacterium bovis (strain ATCC BAA-935 / AF2122/97).